A 454-amino-acid polypeptide reads, in one-letter code: CCA-adding enzyme (454 aa).

Residues serine 59 and arginine 62 each coordinate ATP. CTP-binding residues include serine 59 and arginine 62. Aspartate 71, aspartate 73, and aspartate 125 together coordinate Mg(2+). Histidine 148, lysine 167, and tyrosine 176 together coordinate ATP. CTP contacts are provided by histidine 148, lysine 167, and tyrosine 176.

Belongs to the tRNA nucleotidyltransferase/poly(A) polymerase family. Archaeal CCA-adding enzyme subfamily. As to quaternary structure, homodimer. Requires Mg(2+) as cofactor.

The enzyme catalyses a tRNA precursor + 2 CTP + ATP = a tRNA with a 3' CCA end + 3 diphosphate. The catalysed reaction is a tRNA with a 3' CCA end + 2 CTP + ATP = a tRNA with a 3' CCACCA end + 3 diphosphate. In terms of biological role, catalyzes the addition and repair of the essential 3'-terminal CCA sequence in tRNAs without using a nucleic acid template. Adds these three nucleotides in the order of C, C, and A to the tRNA nucleotide-73, using CTP and ATP as substrates and producing inorganic pyrophosphate. tRNA 3'-terminal CCA addition is required both for tRNA processing and repair. Also involved in tRNA surveillance by mediating tandem CCA addition to generate a CCACCA at the 3' terminus of unstable tRNAs. While stable tRNAs receive only 3'-terminal CCA, unstable tRNAs are marked with CCACCA and rapidly degraded. This chain is CCA-adding enzyme, found in Methanosarcina mazei (strain ATCC BAA-159 / DSM 3647 / Goe1 / Go1 / JCM 11833 / OCM 88) (Methanosarcina frisia).